We begin with the raw amino-acid sequence, 201 residues long: NADH-quinone oxidoreductase subunit I (201 aa).

2 consecutive 4Fe-4S ferredoxin-type domains span residues 78-107 and 116-147; these read MSYE…RIEA and KVVR…MTDI. [4Fe-4S] cluster contacts are provided by Cys-87, Cys-90, Cys-93, Cys-97, Cys-127, Cys-130, Cys-133, and Cys-137.

Belongs to the complex I 23 kDa subunit family. In terms of assembly, NDH-1 is composed of 14 different subunits. Subunits NuoA, H, J, K, L, M, N constitute the membrane sector of the complex. [4Fe-4S] cluster serves as cofactor.

It localises to the cell inner membrane. The catalysed reaction is a quinone + NADH + 5 H(+)(in) = a quinol + NAD(+) + 4 H(+)(out). Its function is as follows. NDH-1 shuttles electrons from NADH, via FMN and iron-sulfur (Fe-S) centers, to quinones in the respiratory chain. The immediate electron acceptor for the enzyme in this species is believed to be ubiquinone. Couples the redox reaction to proton translocation (for every two electrons transferred, four hydrogen ions are translocated across the cytoplasmic membrane), and thus conserves the redox energy in a proton gradient. This Aquifex aeolicus (strain VF5) protein is NADH-quinone oxidoreductase subunit I.